The primary structure comprises 2360 residues: DNA (cytosine-5-)-methyltransferase DMT5 (2360 aa).

The region spanning 48–507 is the SAM-dependent MTase C5-type domain; that stretch reads FTVGTMCSGT…LCILIAERQV (460 aa). The active site involves cysteine 146. The Helicase ATP-binding domain maps to 1258-1575; that stretch reads AEVVNRARGG…CAIADLVNMH (318 aa). 1271–1278 is a binding site for ATP; it reads HDVGFGKT. The interval 1451–1498 is disordered; sequence SRRKDQKSKATARTQRAKKKSKKPRRTAAAAAESDHSAESDSDSAMDD. The segment covering 1465–1476 has biased composition (basic residues); sequence QRAKKKSKKPRR. The RING-type; degenerate zinc-finger motif lies at 2018-2070; sequence CSVCGSQDNTEMKDLSLFITCGHLLCSGCVAAHEHQHGQAESTTGEVLCPVDS. Positions 2102-2267 constitute a Helicase C-terminal domain; that stretch reads KVMKILDVIR…RMPLDDLDYK (166 aa).

It in the N-terminal section; belongs to the class I-like SAM-binding methyltransferase superfamily. C5-methyltransferase family. In the C-terminal section; belongs to the SNF2/RAD54 helicase family.

Its subcellular location is the nucleus. It localises to the chromosome. The enzyme catalyses a 2'-deoxycytidine in DNA + S-adenosyl-L-methionine + ATP + H2O = a 5-methyl-2'-deoxycytidine in DNA + S-adenosyl-L-homocysteine + ADP + phosphate + 2 H(+). Its function is as follows. May play a role in cytosine methylation at palindromic 5'-CG-3' and 5'-C[ACT]G-3' sites in DNA. The chain is DNA (cytosine-5-)-methyltransferase DMT5 from Verticillium dahliae (strain VdLs.17 / ATCC MYA-4575 / FGSC 10137) (Verticillium wilt).